The sequence spans 244 residues: Secreted RxLR effector protein RXLR-C05 (244 aa).

Residues 1–21 form the signal peptide; the sequence is MRGAFYVATAFLIASSTRTAA. Positions 37 to 46 are enriched in basic and acidic residues; that stretch reads LPVGDSDTKS. The tract at residues 37–56 is disordered; sequence LPVGDSDTKSLPRRSLKGSG. Positions 50–68 match the RxLR-dEER motif; it reads RSLKGSGDRLEIPVAEEER.

Belongs to the RxLR effector family.

The protein localises to the secreted. The protein resides in the host cytoplasm. Its subcellular location is the host nucleus. Its function is as follows. Secreted effector that suppresses pattern-triggered immunity (PTI) in plant host. The sequence is that of Secreted RxLR effector protein RXLR-C05 from Plasmopara halstedii (Downy mildew of sunflower).